Consider the following 358-residue polypeptide: ATP-dependent (S)-NAD(P)H-hydrate dehydratase (358 aa).

Residues 63–354 (LLQSAKNVIP…QQIHQAFEEL (292 aa)) form the YjeF C-terminal domain. Residues Gly-163 and 220 to 226 (NVVEFDR) contribute to the (6S)-NADPHX site. ATP-binding positions include 261-265 (KGQHD) and 280-289 (GSNRRCGGQG). Residue Asp-290 participates in (6S)-NADPHX binding.

Belongs to the NnrD/CARKD family. Mg(2+) is required as a cofactor.

The enzyme catalyses (6S)-NADHX + ATP = ADP + phosphate + NADH + H(+). It carries out the reaction (6S)-NADPHX + ATP = ADP + phosphate + NADPH + H(+). Functionally, catalyzes the dehydration of the S-form of NAD(P)HX at the expense of ATP, which is converted to ADP. Together with NAD(P)HX epimerase, which catalyzes the epimerization of the S- and R-forms, the enzyme allows the repair of both epimers of NAD(P)HX, a damaged form of NAD(P)H that is a result of enzymatic or heat-dependent hydration. The polypeptide is ATP-dependent (S)-NAD(P)H-hydrate dehydratase (Nematostella vectensis (Starlet sea anemone)).